The following is a 322-amino-acid chain: GDSL esterase/lipase At2g04020 (322 aa).

The N-terminal stretch at 1–26 is a signal peptide; it reads MGLPSSLESYLLLILLSFLNVSTIYS. The active-site Nucleophile is the S50. N260 is a glycosylation site (N-linked (GlcNAc...) asparagine). Active-site residues include D296 and H299.

This sequence belongs to the 'GDSL' lipolytic enzyme family.

The protein resides in the secreted. The protein is GDSL esterase/lipase At2g04020 of Arabidopsis thaliana (Mouse-ear cress).